A 72-amino-acid chain; its full sequence is UPF0270 protein KPK_0377 (72 aa).

This sequence belongs to the UPF0270 family.

This is UPF0270 protein KPK_0377 from Klebsiella pneumoniae (strain 342).